Reading from the N-terminus, the 344-residue chain is Dihydroorotase (344 aa).

H13 and H15 together coordinate Zn(2+). Substrate contacts are provided by residues 15–17 (HLR) and N41. Zn(2+)-binding residues include K99, H136, and H174. The residue at position 99 (K99) is an N6-carboxylysine. H136 serves as a coordination point for substrate. L219 is a binding site for substrate. D247 contacts Zn(2+). The active site involves D247. Residues H251 and A263 each contribute to the substrate site.

The protein belongs to the metallo-dependent hydrolases superfamily. DHOase family. Class II DHOase subfamily. In terms of assembly, homodimer. It depends on Zn(2+) as a cofactor.

It catalyses the reaction (S)-dihydroorotate + H2O = N-carbamoyl-L-aspartate + H(+). The protein operates within pyrimidine metabolism; UMP biosynthesis via de novo pathway; (S)-dihydroorotate from bicarbonate: step 3/3. Catalyzes the reversible cyclization of carbamoyl aspartate to dihydroorotate. This Shewanella denitrificans (strain OS217 / ATCC BAA-1090 / DSM 15013) protein is Dihydroorotase.